The chain runs to 115 residues: Tyrosine-protein phosphatase 19 (115 aa).

The Tyrosine-protein phosphatase domain maps to 1-115; the sequence is WLMIVEQKCR…ETGSDAPMVV (115 aa). A substrate-binding site is contributed by Asp83.

It belongs to the protein-tyrosine phosphatase family.

The catalysed reaction is O-phospho-L-tyrosyl-[protein] + H2O = L-tyrosyl-[protein] + phosphate. This is Tyrosine-protein phosphatase 19 (STY-19) from Styela plicata (Wrinkled sea squirt).